The sequence spans 696 residues: DNA topoisomerase 6 subunit B (696 aa).

A disordered region spans residues 1 to 36 (MDDDAGDGAASGGTKRKVTAASSSAAAKGKAAGKGK). A compositionally biased stretch (low complexity) spans 20–36 (AASSSAAAKGKAAGKGK). ATP contacts are provided by residues asparagine 88, aspartate 187, 208-209 (TK), 217-224 (GKFGLGAK), and lysine 543.

It belongs to the TOP6B family. In terms of assembly, homodimer. Heterotetramer of two TOP6A and two TOP6B subunits. Interacts with SPO11-2 and TOP6A3. Highly expressed in flowers before pollination. Expressed in roots and shoots.

It is found in the nucleus. The catalysed reaction is ATP-dependent breakage, passage and rejoining of double-stranded DNA.. Component of the DNA topoisomerase VI involved in chromatin organization and progression of endoreduplication cycles. Relaxes both positive and negative superturns and exhibits a strong decatenase activity. The B subunit binds ATP. May be involved in cell proliferation and stress tolerance. In Oryza sativa subsp. indica (Rice), this protein is DNA topoisomerase 6 subunit B.